The chain runs to 232 residues: MSISNSIRAQIPPIHPEGYPFIGGFALVSLILFWIFTPLGWIGTLLTVWCALFFRDPIRVTPQREGLVVAPADGRISMITRALPPAELGLGDRPLLRVSIFMSVFNVHVNRSPVAGRIEKISYRPGAFINAELDKASEDNERNSLAISTPHGKIGVVQIAGLVARRIVSFVREGQTVGAGERFGLIRFGSRLDVYLPDGTEVLVSEGQTAIAGETILADFDVATPGLTFRSQ.

S190 (schiff-base intermediate with substrate; via pyruvic acid) is an active-site residue. A Pyruvic acid (Ser); by autocatalysis modification is found at S190.

The protein belongs to the phosphatidylserine decarboxylase family. PSD-A subfamily. Heterodimer of a large membrane-associated beta subunit and a small pyruvoyl-containing alpha subunit. Pyruvate is required as a cofactor. Is synthesized initially as an inactive proenzyme. Formation of the active enzyme involves a self-maturation process in which the active site pyruvoyl group is generated from an internal serine residue via an autocatalytic post-translational modification. Two non-identical subunits are generated from the proenzyme in this reaction, and the pyruvate is formed at the N-terminus of the alpha chain, which is derived from the carboxyl end of the proenzyme. The post-translation cleavage follows an unusual pathway, termed non-hydrolytic serinolysis, in which the side chain hydroxyl group of the serine supplies its oxygen atom to form the C-terminus of the beta chain, while the remainder of the serine residue undergoes an oxidative deamination to produce ammonia and the pyruvoyl prosthetic group on the alpha chain.

The protein resides in the cell membrane. The enzyme catalyses a 1,2-diacyl-sn-glycero-3-phospho-L-serine + H(+) = a 1,2-diacyl-sn-glycero-3-phosphoethanolamine + CO2. Its pathway is phospholipid metabolism; phosphatidylethanolamine biosynthesis; phosphatidylethanolamine from CDP-diacylglycerol: step 2/2. Its function is as follows. Catalyzes the formation of phosphatidylethanolamine (PtdEtn) from phosphatidylserine (PtdSer). The sequence is that of Phosphatidylserine decarboxylase proenzyme from Bradyrhizobium sp. (strain BTAi1 / ATCC BAA-1182).